The chain runs to 453 residues: Putative receptor-like protein kinase At2g30940 (453 aa).

Residues 60–80 traverse the membrane as a helical segment; that stretch reads ASASIAFLLVLIISVLLCFIF. T155 carries the phosphothreonine modification. One can recognise a Protein kinase domain in the interval 166-428; sequence FADDNVITKG…IHMLQPHDLL (263 aa). ATP is bound by residues 172–180 and K194; that span reads ITKGDSSTV. Y240 bears the Phosphotyrosine mark. D293 functions as the Proton acceptor in the catalytic mechanism. A Phosphoserine modification is found at S297. Residue T322 is modified to Phosphothreonine.

This sequence belongs to the protein kinase superfamily.

The protein resides in the cell membrane. It carries out the reaction L-seryl-[protein] + ATP = O-phospho-L-seryl-[protein] + ADP + H(+). It catalyses the reaction L-threonyl-[protein] + ATP = O-phospho-L-threonyl-[protein] + ADP + H(+). In Arabidopsis thaliana (Mouse-ear cress), this protein is Putative receptor-like protein kinase At2g30940.